Consider the following 396-residue polypeptide: Mannonate dehydratase (396 aa).

This sequence belongs to the mannonate dehydratase family. Fe(2+) is required as a cofactor. Mn(2+) serves as cofactor.

It carries out the reaction D-mannonate = 2-dehydro-3-deoxy-D-gluconate + H2O. Its pathway is carbohydrate metabolism; pentose and glucuronate interconversion. Functionally, catalyzes the dehydration of D-mannonate. This chain is Mannonate dehydratase, found in Enterobacter sp. (strain 638).